Consider the following 224-residue polypeptide: Uridylate kinase (224 aa).

Residue 8–12 (KITGK) coordinates ATP. Gly-43 contributes to the UMP binding site. ATP-binding residues include Gly-44 and Arg-48. Residues Asp-66 and 114 to 120 (LIPGQST) contribute to the UMP site. ATP is bound by residues Ser-140, Tyr-146, and Asp-149.

Belongs to the UMP kinase family. Homohexamer.

The protein resides in the cytoplasm. The enzyme catalyses UMP + ATP = UDP + ADP. It participates in pyrimidine metabolism; CTP biosynthesis via de novo pathway; UDP from UMP (UMPK route): step 1/1. With respect to regulation, inhibited by UTP. Functionally, catalyzes the reversible phosphorylation of UMP to UDP. In Staphylothermus marinus (strain ATCC 43588 / DSM 3639 / JCM 9404 / F1), this protein is Uridylate kinase.